A 182-amino-acid chain; its full sequence is MGDEEKRNRAITARRQHLKSVMLQIAATELEKEEGRREAEKQNYLAEHCPPLSLPGSMAEVQELCKQLHAKIDAAEEEKYDMEIKVQKSSKELEDMNQKLFDLRGKFKRPPLRRVRMSADAMLKALLGSKHKVCMDLRANLKQVKKEDTEKERDLRDVGDWRKNIEEKSGMEGRKKMFESES.

At Gly2 the chain carries N-acetylglycine. Residues 2–48 (GDEEKRNRAITARRQHLKSVMLQIAATELEKEEGRREAEKQNYLAEH) form an involved in binding TNC region. Thr12 carries the post-translational modification Phosphothreonine; by PHK. Residues 97–117 (NQKLFDLRGKFKRPPLRRVRM) form an involved in binding TNC and actin region. Ser118 carries the post-translational modification Phosphoserine; by PKA.

This sequence belongs to the troponin I family. As to quaternary structure, binds to actin and tropomyosin.

In terms of biological role, troponin I is the inhibitory subunit of troponin, the thin filament regulatory complex which confers calcium-sensitivity to striated muscle actomyosin ATPase activity. The protein is Troponin I, fast skeletal muscle (TNNI2) of Oryctolagus cuniculus (Rabbit).